Consider the following 132-residue polypeptide: Small ribosomal subunit protein uS8c (132 aa).

This sequence belongs to the universal ribosomal protein uS8 family. In terms of assembly, part of the 30S ribosomal subunit.

Its subcellular location is the plastid. It is found in the chloroplast. Its function is as follows. One of the primary rRNA binding proteins, it binds directly to 16S rRNA central domain where it helps coordinate assembly of the platform of the 30S subunit. This Zygnema circumcarinatum (Green alga) protein is Small ribosomal subunit protein uS8c (rps8).